Here is a 220-residue protein sequence, read N- to C-terminus: Octanoyltransferase (220 aa).

Residues 36 to 212 enclose the BPL/LPL catalytic domain; the sequence is ADSPDQFWLV…CLARQLGRRL (177 aa). Substrate is bound by residues 75–82, 142–144, and 155–157; these read RGGQVTYH, SLG, and GVA. The active-site Acyl-thioester intermediate is C173.

This sequence belongs to the LipB family.

It localises to the cytoplasm. It catalyses the reaction octanoyl-[ACP] + L-lysyl-[protein] = N(6)-octanoyl-L-lysyl-[protein] + holo-[ACP] + H(+). It functions in the pathway protein modification; protein lipoylation via endogenous pathway; protein N(6)-(lipoyl)lysine from octanoyl-[acyl-carrier-protein]: step 1/2. Catalyzes the transfer of endogenously produced octanoic acid from octanoyl-acyl-carrier-protein onto the lipoyl domains of lipoate-dependent enzymes. Lipoyl-ACP can also act as a substrate although octanoyl-ACP is likely to be the physiological substrate. The sequence is that of Octanoyltransferase from Chromohalobacter salexigens (strain ATCC BAA-138 / DSM 3043 / CIP 106854 / NCIMB 13768 / 1H11).